The chain runs to 469 residues: 3-isopropylmalate dehydratase large subunit (469 aa).

[4Fe-4S] cluster is bound by residues Cys350, Cys410, and Cys413.

It belongs to the aconitase/IPM isomerase family. LeuC type 1 subfamily. As to quaternary structure, heterodimer of LeuC and LeuD. It depends on [4Fe-4S] cluster as a cofactor.

It carries out the reaction (2R,3S)-3-isopropylmalate = (2S)-2-isopropylmalate. It functions in the pathway amino-acid biosynthesis; L-leucine biosynthesis; L-leucine from 3-methyl-2-oxobutanoate: step 2/4. Its function is as follows. Catalyzes the isomerization between 2-isopropylmalate and 3-isopropylmalate, via the formation of 2-isopropylmaleate. The polypeptide is 3-isopropylmalate dehydratase large subunit (Sinorhizobium medicae (strain WSM419) (Ensifer medicae)).